The sequence spans 631 residues: E3 ubiquitin-protein ligase Zswim2 (631 aa).

The SWIM-type zinc finger occupies 54–87 (FRVLLGNPHECSCPTFLKRGELCKHICWVLLKKF). The UBE2D1-binding stretch occupies residues 139 to 348 (KDINAGDICP…APGYQCRLCL (210 aa)). An RING-type 1 zinc finger spans residues 147–199 (CPICQEVLLEKKLPVTFCRFGCGNNVHIKCMRILANYQDTGSDSSVLRCPLCR). A ZZ-type zinc finger spans residues 230-281 (HLGIPCNNCNQLPIEGRCYKCTECVEYHLCQECFDSCCHSSHAFASREKRNQ). Residues Cys235, Cys238, Cys250, Cys253, Cys259, Cys262, His268, and His271 each contribute to the Zn(2+) site. Residues 344 to 386 (CRLCLKSFSFGQYTRLLPCTHKFHRKCIDNWLLHKCNSCPIDR) form an RING-type 2 zinc finger. A disordered region spans residues 589–614 (SKRQNNSMGKVRQKLGHPPRRPAYPP). The segment covering 599–608 (VRQKLGHPPR) has biased composition (basic residues).

Dimer. Interacts with UBE2D1. In terms of processing, polyubiquitinated. Polyubiquitination is followed by degradation via the proteasome. Expressed only in testis.

It carries out the reaction S-ubiquitinyl-[E2 ubiquitin-conjugating enzyme]-L-cysteine + [acceptor protein]-L-lysine = [E2 ubiquitin-conjugating enzyme]-L-cysteine + N(6)-ubiquitinyl-[acceptor protein]-L-lysine.. E3 ubiquitin-protein ligase involved in the regulation of Fas-, DR3- and DR4-mediated apoptosis. Functions in conjunction with the UBE2D1, UBE2D3 and UBE2E1 E2 ubiquitin-conjugating enzymes. The sequence is that of E3 ubiquitin-protein ligase Zswim2 (Zswim2) from Mus musculus (Mouse).